The sequence spans 397 residues: Neuroplastin (397 aa).

Positions 1-28 (MSGSSLPGALALSLLLVSGSLLPGPGAA) are cleaved as a signal peptide. 3 Ig-like domains span residues 29-134 (QNAG…PSIT), 148-234 (PRIV…IEVK), and 237-327 (PDIT…ASVS). The Extracellular portion of the chain corresponds to 29–338 (QNAGFVKSPM…VLRVRSHLAP (310 aa)). Cysteines 52 and 116 form a disulfide. The interval 149 to 161 (RIVTSEEVIIRES) is narpin; mediates binding with FGFR1 and has antidepressant-like activity. A disulfide bond links Cys-169 and Cys-217. N-linked (GlcNAc...) asparagine glycosylation is found at Asn-170, Asn-196, Asn-228, Asn-283, Asn-295, and Asn-316. Cys-258 and Cys-315 are oxidised to a cystine. The chain crosses the membrane as a helical span at residues 339 to 359 (LWPFLGILAEIIILVVIIVVY). The Cytoplasmic portion of the chain corresponds to 360-397 (EKRKRPDEVPDDDEPAGPMKTNSTNNHKDKNLRQRNTN). Residues 364 to 397 (RPDEVPDDDEPAGPMKTNSTNNHKDKNLRQRNTN) are disordered.

Interacts with ATP2B1; this interaction stabilizes ATP2B1 and increases ATPase activity; this interaction controls T cell calcium homeostasis following T cell activation. Interacts with XKR8; promoting its localization at the cell membrane. In terms of processing, N-glycosylated. Isoform 1 and isoform 2 are widely expressed with variable levels in brain. Isoform 1 is expressed in cerebellum and midbrain. Isoform 1 and isoform 2 are expressed in cerebral cortex, hippocampus and striatum. Isoform 2 is more abundant in the cerebral cortex than isoform 1.

The protein localises to the cell membrane. Its subcellular location is the postsynaptic density. Functionally, probable homophilic and heterophilic cell adhesion molecule involved in long term potentiation at hippocampal excitatory synapses through activation of p38MAPK. May also regulate neurite outgrowth by activating the FGFR1 signaling pathway. May play a role in synaptic plasticity. Also acts as a chaperone for ATP2B1; stabilizes ATP2B1 and increases its ATPase activity. Promotes localization of XKR8 at the cell membrane. This Mus musculus (Mouse) protein is Neuroplastin (Nptn).